Here is a 200-residue protein sequence, read N- to C-terminus: Imidazole glycerol phosphate synthase subunit HisH (200 aa).

The 198-residue stretch at 3 to 200 (DVALIDAGGA…LHNFLEMSFP (198 aa)) folds into the Glutamine amidotransferase type-1 domain. Cys-78 serves as the catalytic Nucleophile. Active-site residues include His-179 and Glu-181.

Heterodimer of HisH and HisF.

It is found in the cytoplasm. The catalysed reaction is 5-[(5-phospho-1-deoxy-D-ribulos-1-ylimino)methylamino]-1-(5-phospho-beta-D-ribosyl)imidazole-4-carboxamide + L-glutamine = D-erythro-1-(imidazol-4-yl)glycerol 3-phosphate + 5-amino-1-(5-phospho-beta-D-ribosyl)imidazole-4-carboxamide + L-glutamate + H(+). It catalyses the reaction L-glutamine + H2O = L-glutamate + NH4(+). The protein operates within amino-acid biosynthesis; L-histidine biosynthesis; L-histidine from 5-phospho-alpha-D-ribose 1-diphosphate: step 5/9. Its function is as follows. IGPS catalyzes the conversion of PRFAR and glutamine to IGP, AICAR and glutamate. The HisH subunit catalyzes the hydrolysis of glutamine to glutamate and ammonia as part of the synthesis of IGP and AICAR. The resulting ammonia molecule is channeled to the active site of HisF. This Xanthomonas oryzae pv. oryzae (strain MAFF 311018) protein is Imidazole glycerol phosphate synthase subunit HisH.